The sequence spans 162 residues: UPF0114 protein Sden_0436 (162 aa).

The next 3 helical transmembrane spans lie at 15–35 (IMAP…IKFF), 53–73 (LVLI…LIMV), and 136–156 (IMWY…MGYL).

It belongs to the UPF0114 family.

The protein resides in the cell membrane. In Shewanella denitrificans (strain OS217 / ATCC BAA-1090 / DSM 15013), this protein is UPF0114 protein Sden_0436.